Here is an 80-residue protein sequence, read N- to C-terminus: Cell division activator CedA (80 aa).

The protein belongs to the CedA family.

Its function is as follows. Activates the cell division inhibited by chromosomal DNA over-replication. The chain is Cell division activator CedA from Salmonella typhimurium (strain LT2 / SGSC1412 / ATCC 700720).